Consider the following 466-residue polypeptide: Acetyl-coenzyme A carboxylase carboxyl transferase subunit beta, chloroplastic (466 aa).

The region spanning 198 to 466 (LWIQCENCYE…FPLNQNSIGQ (269 aa)) is the CoA carboxyltransferase N-terminal domain. Residues cysteine 202, cysteine 205, cysteine 221, and cysteine 224 each contribute to the Zn(2+) site. The segment at 202–224 (CENCYELNYKKLLKSKMRICDEC) adopts a C4-type zinc-finger fold.

This sequence belongs to the AccD/PCCB family. In terms of assembly, acetyl-CoA carboxylase is a heterohexamer composed of biotin carboxyl carrier protein, biotin carboxylase and 2 subunits each of ACCase subunit alpha and ACCase plastid-coded subunit beta (accD). Requires Zn(2+) as cofactor.

It is found in the plastid. It localises to the chloroplast stroma. It catalyses the reaction N(6)-carboxybiotinyl-L-lysyl-[protein] + acetyl-CoA = N(6)-biotinyl-L-lysyl-[protein] + malonyl-CoA. Its pathway is lipid metabolism; malonyl-CoA biosynthesis; malonyl-CoA from acetyl-CoA: step 1/1. Functionally, component of the acetyl coenzyme A carboxylase (ACC) complex. Biotin carboxylase (BC) catalyzes the carboxylation of biotin on its carrier protein (BCCP) and then the CO(2) group is transferred by the transcarboxylase to acetyl-CoA to form malonyl-CoA. In Fagopyrum esculentum subsp. ancestrale (Wild buckwheat), this protein is Acetyl-coenzyme A carboxylase carboxyl transferase subunit beta, chloroplastic.